We begin with the raw amino-acid sequence, 260 residues long: MAHLLILDALNLIRRIHSVQSKQHPDDVAAQLAATDITMQRAVNTILQEATPSHVIAVFDSEAPGWRKAKYAAYKEGRTAMPDALRQGLGQLQDSLLRLGIDSLVSETDEADDLIATLVKPLVANDHQVTLISTDKGFCQLLDSGLQIRDYFNKRWLDHAFVQQQYGLQPSQLVDFWALTGISGMNIKGVPGIGEKTAQQLLSEYGTLTQLLDADATDNKKLQLVQQHREVCLLAQELVRLKDDIPLGFNLKDLRYTPPA.

Aspartate 112 serves as a coordination point for Mg(2+). Residues 168-258 (LQPSQLVDFW…FNLKDLRYTP (91 aa)) form the 5'-3' exonuclease domain. Residues leucine 179, valine 190, and isoleucine 193 each coordinate K(+). An interaction with DNA region spans residues 192 to 197 (GIGEKT).

Belongs to the Xni family. The cofactor is Mg(2+). It depends on K(+) as a cofactor.

Its function is as follows. Has flap endonuclease activity. During DNA replication, flap endonucleases cleave the 5'-overhanging flap structure that is generated by displacement synthesis when DNA polymerase encounters the 5'-end of a downstream Okazaki fragment. This chain is Flap endonuclease Xni, found in Tolumonas auensis (strain DSM 9187 / NBRC 110442 / TA 4).